Here is a 301-residue protein sequence, read N- to C-terminus: MPT51 antigen (301 aa).

A signal peptide spans 1–36 (MRGLSAVVRVLCVAALAVGVFAAAVLLAGTAGNAKA).

It belongs to the mycobacterial A85 antigen family. As to quaternary structure, homodimer.

The protein localises to the secreted. Functionally, may have a role in host tissue attachment, whereby ligands may include the serum protein fibronectin and small sugars. In Mycobacterium leprae (strain TN), this protein is MPT51 antigen (mpt51).